A 100-amino-acid chain; its full sequence is NADH-ubiquinone oxidoreductase chain 4L (100 aa).

The next 3 membrane-spanning stretches (helical) occupy residues 3-23 (LSKY…GIFL), 28-48 (IIVM…NFLL), and 61-81 (FALL…ALLV).

This sequence belongs to the complex I subunit 4L family. Complex I is composed of about 45 different subunits.

It is found in the mitochondrion membrane. The catalysed reaction is a ubiquinone + NADH + 5 H(+)(in) = a ubiquinol + NAD(+) + 4 H(+)(out). In terms of biological role, core subunit of the mitochondrial membrane respiratory chain NADH dehydrogenase (Complex I) that is believed to belong to the minimal assembly required for catalysis. Complex I functions in the transfer of electrons from NADH to the respiratory chain. The immediate electron acceptor for the enzyme is believed to be ubiquinone. This Prototheca wickerhamii protein is NADH-ubiquinone oxidoreductase chain 4L (ND4L).